The following is a 235-amino-acid chain: 2-C-methyl-D-erythritol 4-phosphate cytidylyltransferase (235 aa).

The protein belongs to the IspD/TarI cytidylyltransferase family. IspD subfamily.

The enzyme catalyses 2-C-methyl-D-erythritol 4-phosphate + CTP + H(+) = 4-CDP-2-C-methyl-D-erythritol + diphosphate. It functions in the pathway isoprenoid biosynthesis; isopentenyl diphosphate biosynthesis via DXP pathway; isopentenyl diphosphate from 1-deoxy-D-xylulose 5-phosphate: step 2/6. Functionally, catalyzes the formation of 4-diphosphocytidyl-2-C-methyl-D-erythritol from CTP and 2-C-methyl-D-erythritol 4-phosphate (MEP). The chain is 2-C-methyl-D-erythritol 4-phosphate cytidylyltransferase from Pseudomonas putida (strain W619).